The chain runs to 317 residues: Protein lifeguard 2 (317 aa).

Positions 1–54 (MTQGKLSVANKAPGTEGQQHQANGEKKDAPAVPSAPPSYEEATSGEGLKAGTFP) are disordered. 3 helical membrane passes run 107-127 (VYTILLVQLLVTLAVVALFTF), 139-159 (PGWYWASYAVFFATYLTLACC), and 166-186 (FPWNLILLTIFTLSMAYLTGM). N-linked (GlcNAc...) asparagine glycosylation is present at N192. The next 4 membrane-spanning stretches (helical) occupy residues 195-215 (SVLLCLVITALVCLSVTIFSF), 226-246 (GVLFVLLMTLFFSGLLLAVLL), 252-272 (PWLHAVYAVLGAGVFTLFLAF), and 291-311 (IFGALNIYLDIIYIFTFFLQL).

It belongs to the BI1 family. LFG subfamily. As to quaternary structure, interacts with FAS/TNFRSF6 and BAX. Brain. Highly expressed in cerebellum, also found in cortex, olfactory bulb, and hippocampus.

Its subcellular location is the cell membrane. It localises to the membrane raft. The protein resides in the postsynaptic cell membrane. Antiapoptotic protein which protects cells uniquely from Fas-induced apoptosis. Regulates Fas-mediated apoptosis in neurons by interfering with caspase-8 activation. Plays a role in cerebellar development by affecting cerebellar size, internal granular layer (IGL) thickness, and Purkinje cell (PC) development. The polypeptide is Protein lifeguard 2 (Faim2) (Mus musculus (Mouse)).